Consider the following 196-residue polypeptide: dITP/XTP pyrophosphatase (196 aa).

Substrate is bound at residue 10–15 (TTNPHK). D68 (proton acceptor) is an active-site residue. D68 contacts Mg(2+). Substrate-binding positions include S69, 148 to 151 (FGYD), and 175 to 176 (HR).

This sequence belongs to the HAM1 NTPase family. As to quaternary structure, homodimer. It depends on Mg(2+) as a cofactor.

The enzyme catalyses XTP + H2O = XMP + diphosphate + H(+). It catalyses the reaction dITP + H2O = dIMP + diphosphate + H(+). It carries out the reaction ITP + H2O = IMP + diphosphate + H(+). Functionally, pyrophosphatase that catalyzes the hydrolysis of nucleoside triphosphates to their monophosphate derivatives, with a high preference for the non-canonical purine nucleotides XTP (xanthosine triphosphate), dITP (deoxyinosine triphosphate) and ITP. Seems to function as a house-cleaning enzyme that removes non-canonical purine nucleotides from the nucleotide pool, thus preventing their incorporation into DNA/RNA and avoiding chromosomal lesions. In Thermotoga maritima (strain ATCC 43589 / DSM 3109 / JCM 10099 / NBRC 100826 / MSB8), this protein is dITP/XTP pyrophosphatase.